The following is a 198-amino-acid chain: Alpha1-proteinase inhibitor-degradation deficient protein 37 (198 aa).

Ser-79 is subject to Phosphoserine.

It is found in the cytoplasm. Functionally, involved in ER-associated protein degradation (ERAD). The protein is Alpha1-proteinase inhibitor-degradation deficient protein 37 (ADD37) of Saccharomyces cerevisiae (strain ATCC 204508 / S288c) (Baker's yeast).